The chain runs to 1002 residues: Isoleucine--tRNA ligase, mitochondrial (1002 aa).

The 'HIGH' region motif lies at 94 to 104 (PYANGELHLGH). The short motif at 668–672 (KMSKS) is the 'KMSKS' region element. Position 671 (lysine 671) interacts with ATP.

This sequence belongs to the class-I aminoacyl-tRNA synthetase family.

The protein localises to the mitochondrion matrix. It carries out the reaction tRNA(Ile) + L-isoleucine + ATP = L-isoleucyl-tRNA(Ile) + AMP + diphosphate. The protein is Isoleucine--tRNA ligase, mitochondrial (ISM1) of Saccharomyces cerevisiae (strain ATCC 204508 / S288c) (Baker's yeast).